The chain runs to 611 residues: MTIKLLSESTINRIAAGEVIERPASVVKELVENAVDAGSTKIDIILERAGKNLIIISDDGVGMTDKELEIAVERHTTSKLDETDFLNIHTFGFRGEALPSIAAISKMLITSKKRDNQKAFQIKLIGGDEKQIAPAIHNEGTKIEIRDLFFATPARLKFLRTDKTELAATVDVVKKIALAHPEISFSLTHDGKTLLKLKGQNKDAENNLKQRIIDVIGEDFIKNASYIDFKSPDFSIYGYTSIPTYNRASSEDQFLFINNRPVKDKLLQVALRVAYQDYMPRDRYPLCAIFLQIDPQLVDVNVHPAKAEVRFHDPNYVRNLLIDSIKNALSNKSHIASTTIASSAIELFKNPFVNKEPAISKPLNVNSKPSEYRPATSPTVPKYTPNNSCQKLIDTLPHARIEQEVEQRIQNEPQKSSQYRLGAAKAQLHTTYVISQTEDSIVITDQHAAHERLGYEKIKNYIKNEELIKQRLLIPEIVELPDEKRADILYENKDKLSKLGLSLEKFGEKSIIVTEIPNILGDINVQKLIQDLADHLAECGENIALTELIEHVTETYACHYSIRAGRKLSADEMNALLRQMENTPFSGQCNHGRPTYIELKLKDIERLFGRK.

Belongs to the DNA mismatch repair MutL/HexB family.

In terms of biological role, this protein is involved in the repair of mismatches in DNA. It is required for dam-dependent methyl-directed DNA mismatch repair. May act as a 'molecular matchmaker', a protein that promotes the formation of a stable complex between two or more DNA-binding proteins in an ATP-dependent manner without itself being part of a final effector complex. This is DNA mismatch repair protein MutL from Rickettsia bellii (strain RML369-C).